The chain runs to 296 residues: Glycine--tRNA ligase alpha subunit (296 aa).

The protein belongs to the class-II aminoacyl-tRNA synthetase family. In terms of assembly, tetramer of two alpha and two beta subunits.

The protein localises to the cytoplasm. The catalysed reaction is tRNA(Gly) + glycine + ATP = glycyl-tRNA(Gly) + AMP + diphosphate. This chain is Glycine--tRNA ligase alpha subunit, found in Listeria innocua serovar 6a (strain ATCC BAA-680 / CLIP 11262).